Here is a 663-residue protein sequence, read N- to C-terminus: UvrABC system protein B (663 aa).

Residues 27–414 (KNIENGVKDQ…SDNHIAEQLI (388 aa)) form the Helicase ATP-binding domain. An ATP-binding site is contributed by 40–47 (GVTGSGKT). The Beta-hairpin signature appears at 93–116 (YYDYYQPEAYIKTTDTYIEKDSSV). Positions 432–594 (QVDDLLDEIR…IDPKSIIKEI (163 aa)) constitute a Helicase C-terminal domain. Residues 624 to 659 (EKEITKLEKKIKKLVEELDFEQAIILRDEMLKLKEL) enclose the UVR domain.

This sequence belongs to the UvrB family. As to quaternary structure, forms a heterotetramer with UvrA during the search for lesions. Interacts with UvrC in an incision complex.

Its subcellular location is the cytoplasm. In terms of biological role, the UvrABC repair system catalyzes the recognition and processing of DNA lesions. A damage recognition complex composed of 2 UvrA and 2 UvrB subunits scans DNA for abnormalities. Upon binding of the UvrA(2)B(2) complex to a putative damaged site, the DNA wraps around one UvrB monomer. DNA wrap is dependent on ATP binding by UvrB and probably causes local melting of the DNA helix, facilitating insertion of UvrB beta-hairpin between the DNA strands. Then UvrB probes one DNA strand for the presence of a lesion. If a lesion is found the UvrA subunits dissociate and the UvrB-DNA preincision complex is formed. This complex is subsequently bound by UvrC and the second UvrB is released. If no lesion is found, the DNA wraps around the other UvrB subunit that will check the other stand for damage. The protein is UvrABC system protein B of Fusobacterium nucleatum subsp. nucleatum (strain ATCC 25586 / DSM 15643 / BCRC 10681 / CIP 101130 / JCM 8532 / KCTC 2640 / LMG 13131 / VPI 4355).